Consider the following 456-residue polypeptide: Argininosuccinate lyase (456 aa).

Belongs to the lyase 1 family. Argininosuccinate lyase subfamily.

The protein resides in the cytoplasm. The catalysed reaction is 2-(N(omega)-L-arginino)succinate = fumarate + L-arginine. Its pathway is amino-acid biosynthesis; L-arginine biosynthesis; L-arginine from L-ornithine and carbamoyl phosphate: step 3/3. The protein is Argininosuccinate lyase of Listeria monocytogenes serotype 4b (strain F2365).